The sequence spans 136 residues: NADPH-dependent 7-cyano-7-deazaguanine reductase (136 aa).

Residue cysteine 53 is the Thioimide intermediate of the active site. The Proton donor role is filled by aspartate 60. Substrate contacts are provided by residues 75-77 (VEL) and 94-95 (HE).

It belongs to the GTP cyclohydrolase I family. QueF type 1 subfamily.

The protein resides in the cytoplasm. It carries out the reaction 7-aminomethyl-7-carbaguanine + 2 NADP(+) = 7-cyano-7-deazaguanine + 2 NADPH + 3 H(+). It functions in the pathway tRNA modification; tRNA-queuosine biosynthesis. Functionally, catalyzes the NADPH-dependent reduction of 7-cyano-7-deazaguanine (preQ0) to 7-aminomethyl-7-deazaguanine (preQ1). The polypeptide is NADPH-dependent 7-cyano-7-deazaguanine reductase (Nostoc sp. (strain PCC 7120 / SAG 25.82 / UTEX 2576)).